The sequence spans 275 residues: Large ribosomal subunit protein uL2 (275 aa).

Positions arginine 221–lysine 275 are disordered. A compositionally biased stretch (basic residues) spans lysine 253–arginine 262.

It belongs to the universal ribosomal protein uL2 family. As to quaternary structure, part of the 50S ribosomal subunit. Forms a bridge to the 30S subunit in the 70S ribosome.

Functionally, one of the primary rRNA binding proteins. Required for association of the 30S and 50S subunits to form the 70S ribosome, for tRNA binding and peptide bond formation. It has been suggested to have peptidyltransferase activity; this is somewhat controversial. Makes several contacts with the 16S rRNA in the 70S ribosome. In Wigglesworthia glossinidia brevipalpis, this protein is Large ribosomal subunit protein uL2.